The following is a 209-amino-acid chain: MGKFQIISHPLIQHKLSILRRKDTSTKHFRELVNEIAMLMGYEVSRELPLEEVEIETPITKTVQKQLTGKKLAIVPILRAGIGMVDGLLSLVPAAKVGHIGMYRDEETLEPVEYLVKLPEDIDQRQIFVVDPMLATGGSAVLAIDSLKKRGAANIKFVCLVSAPEGLKKLQEAHPDIDIYTAALDEKLNEKGYIVPGLGDAGDRLFGTK.

Residues R79, R104, and D131–S139 contribute to the 5-phospho-alpha-D-ribose 1-diphosphate site. Uracil is bound by residues I194 and G199–A201. D200 contacts 5-phospho-alpha-D-ribose 1-diphosphate.

Belongs to the UPRTase family. It depends on Mg(2+) as a cofactor.

The catalysed reaction is UMP + diphosphate = 5-phospho-alpha-D-ribose 1-diphosphate + uracil. It participates in pyrimidine metabolism; UMP biosynthesis via salvage pathway; UMP from uracil: step 1/1. With respect to regulation, allosterically activated by GTP. Functionally, catalyzes the conversion of uracil and 5-phospho-alpha-D-ribose 1-diphosphate (PRPP) to UMP and diphosphate. The chain is Uracil phosphoribosyltransferase from Streptococcus mutans serotype c (strain ATCC 700610 / UA159).